The sequence spans 352 residues: 4-hydroxy-2-oxovalerate aldolase (352 aa).

In terms of domain architecture, Pyruvate carboxyltransferase spans 13-265 (VRLTDTSLRD…KTGIDFFDIA (253 aa)). 21–22 (RD) lines the substrate pocket. Aspartate 22 provides a ligand contact to Mn(2+). Histidine 25 functions as the Proton acceptor in the catalytic mechanism. Substrate-binding residues include serine 175 and histidine 204. Mn(2+) is bound by residues histidine 204 and histidine 206. Tyrosine 295 is a binding site for substrate.

It belongs to the 4-hydroxy-2-oxovalerate aldolase family.

It catalyses the reaction (S)-4-hydroxy-2-oxopentanoate = acetaldehyde + pyruvate. The protein is 4-hydroxy-2-oxovalerate aldolase of Mycolicibacterium paratuberculosis (strain ATCC BAA-968 / K-10) (Mycobacterium paratuberculosis).